We begin with the raw amino-acid sequence, 272 residues long: MSPATVLDSILEGVRADVAAREASVSLSEIKAAAAAAPPPLDVMAALREPGIGVIAEVKRASPSAGALATIADPAKLAQAYQDGGARIVSVVTEQRRFQGSLDDLDAVRASVSIPVLRKDFVVQPYQIHEARAHGADMLLLIVAALEQSVLVSMLDRTESLGMIALVEVHTEQEADRALKAGAKVIGVNARDLMTLDVDRDCFARIAPGLPSSVIRIAESGVRGTADLLAYAGAGADAVLVGEGLVTSGDPRAAVADLVTAGTHPSCPKPAR.

The protein belongs to the TrpC family.

It carries out the reaction 1-(2-carboxyphenylamino)-1-deoxy-D-ribulose 5-phosphate + H(+) = (1S,2R)-1-C-(indol-3-yl)glycerol 3-phosphate + CO2 + H2O. Its pathway is amino-acid biosynthesis; L-tryptophan biosynthesis; L-tryptophan from chorismate: step 4/5. This chain is Indole-3-glycerol phosphate synthase (trpC), found in Mycobacterium tuberculosis (strain CDC 1551 / Oshkosh).